The chain runs to 96 residues: (4S)-4-hydroxy-5-phosphonooxypentane-2,3-dione isomerase (96 aa).

Residues 2–91 (HVTLVEINVH…MTGPRTKKVF (90 aa)) enclose the ABM domain.

This sequence belongs to the LsrG family. As to quaternary structure, homodimer.

It localises to the cytoplasm. The catalysed reaction is (2S)-2-hydroxy-3,4-dioxopentyl phosphate = 3-hydroxy-2,4-dioxopentyl phosphate. In terms of biological role, involved in the degradation of phospho-AI-2, thereby terminating induction of the lsr operon and closing the AI-2 signaling cycle. Catalyzes the conversion of (4S)-4-hydroxy-5-phosphonooxypentane-2,3-dione (P-DPD) to 3-hydroxy-5-phosphonooxypentane-2,4-dione (P-HPD). This is (4S)-4-hydroxy-5-phosphonooxypentane-2,3-dione isomerase from Salmonella typhimurium (strain LT2 / SGSC1412 / ATCC 700720).